The chain runs to 337 residues: MEIQSNFSLKNYNTFGIEAKAKQFIAVHSVEELKTILKENKNEKKFILGGGSNMLLTKDIDALVIHIDLKGKEIIKEDDDFVWVESQAGETWHDFVLWTIDNNFGGLENMSLIPGNVGTTPVQNIGAYGTEIKDTFVSCNAINIETQETKTFTNAECNFGYRESIFKNEVKDQFIITSVIYKLTKRNHKINTSYGDILAELAKNNISEPTLKDVSNAVIAIRQSKLPDPKELGNSGSFFKNPILLKSDFEQIHKKFPEMKFYEVSETEVKVPAGWLIEQAGFKGKRFGDAGVHKNQALVLVNYGNATGQEILNVSKEVQKTVFETFGIKIEAEVNVI.

Residues 17-186 (IEAKAKQFIA…TSVIYKLTKR (170 aa)) enclose the FAD-binding PCMH-type domain. Arg-162 is a catalytic residue. The active-site Proton donor is Ser-237. Residue Glu-333 is part of the active site.

The protein belongs to the MurB family. Requires FAD as cofactor.

The protein localises to the cytoplasm. The enzyme catalyses UDP-N-acetyl-alpha-D-muramate + NADP(+) = UDP-N-acetyl-3-O-(1-carboxyvinyl)-alpha-D-glucosamine + NADPH + H(+). It functions in the pathway cell wall biogenesis; peptidoglycan biosynthesis. Cell wall formation. This is UDP-N-acetylenolpyruvoylglucosamine reductase from Flavobacterium johnsoniae (strain ATCC 17061 / DSM 2064 / JCM 8514 / BCRC 14874 / CCUG 350202 / NBRC 14942 / NCIMB 11054 / UW101) (Cytophaga johnsonae).